We begin with the raw amino-acid sequence, 149 residues long: 3-hydroxyacyl-[acyl-carrier-protein] dehydratase FabZ (149 aa).

The active site involves histidine 47.

It belongs to the thioester dehydratase family. FabZ subfamily.

It localises to the cytoplasm. The catalysed reaction is a (3R)-hydroxyacyl-[ACP] = a (2E)-enoyl-[ACP] + H2O. Functionally, involved in unsaturated fatty acids biosynthesis. Catalyzes the dehydration of short chain beta-hydroxyacyl-ACPs and long chain saturated and unsaturated beta-hydroxyacyl-ACPs. The sequence is that of 3-hydroxyacyl-[acyl-carrier-protein] dehydratase FabZ from Thioalkalivibrio sulfidiphilus (strain HL-EbGR7).